A 506-amino-acid chain; its full sequence is Cobyric acid synthase (506 aa).

The GATase cobBQ-type domain occupies 251–448 (DITIAIVQLP…LHGLFDSDAF (198 aa)). Cys332 acts as the Nucleophile in catalysis. Residue His440 is part of the active site.

It belongs to the CobB/CobQ family. CobQ subfamily.

It functions in the pathway cofactor biosynthesis; adenosylcobalamin biosynthesis. Catalyzes amidations at positions B, D, E, and G on adenosylcobyrinic A,C-diamide. NH(2) groups are provided by glutamine, and one molecule of ATP is hydrogenolyzed for each amidation. This Salmonella agona (strain SL483) protein is Cobyric acid synthase.